We begin with the raw amino-acid sequence, 366 residues long: tRNA-specific 2-thiouridylase MnmA (366 aa).

Residues 6-13 (AMSGGVDS) and leucine 32 each bind ATP. The active-site Nucleophile is cysteine 101. Cysteines 101 and 198 form a disulfide. Glycine 125 is an ATP binding site. Positions 148–150 (KDQ) are interaction with tRNA. Cysteine 198 serves as the catalytic Cysteine persulfide intermediate.

The protein belongs to the MnmA/TRMU family.

Its subcellular location is the cytoplasm. It carries out the reaction S-sulfanyl-L-cysteinyl-[protein] + uridine(34) in tRNA + AH2 + ATP = 2-thiouridine(34) in tRNA + L-cysteinyl-[protein] + A + AMP + diphosphate + H(+). Catalyzes the 2-thiolation of uridine at the wobble position (U34) of tRNA, leading to the formation of s(2)U34. The chain is tRNA-specific 2-thiouridylase MnmA from Nocardioides sp. (strain ATCC BAA-499 / JS614).